Reading from the N-terminus, the 293-residue chain is Formamidopyrimidine-DNA glycosylase (293 aa).

The Schiff-base intermediate with DNA role is filled by Pro-2. Catalysis depends on Glu-3, which acts as the Proton donor. Lys-58 functions as the Proton donor; for beta-elimination activity in the catalytic mechanism. Residues His-104, Arg-123, and Arg-166 each coordinate DNA. The FPG-type zinc-finger motif lies at 257 to 293 (KVYDREGEPCPTLRCKGHVQRIVQAGRSTFFCATCQR). The active-site Proton donor; for delta-elimination activity is the Arg-283.

This sequence belongs to the FPG family. In terms of assembly, monomer. Zn(2+) is required as a cofactor.

The enzyme catalyses Hydrolysis of DNA containing ring-opened 7-methylguanine residues, releasing 2,6-diamino-4-hydroxy-5-(N-methyl)formamidopyrimidine.. The catalysed reaction is 2'-deoxyribonucleotide-(2'-deoxyribose 5'-phosphate)-2'-deoxyribonucleotide-DNA = a 3'-end 2'-deoxyribonucleotide-(2,3-dehydro-2,3-deoxyribose 5'-phosphate)-DNA + a 5'-end 5'-phospho-2'-deoxyribonucleoside-DNA + H(+). Its function is as follows. Involved in base excision repair of DNA damaged by oxidation or by mutagenic agents. Acts as a DNA glycosylase that recognizes and removes damaged bases. Has a preference for oxidized purines, such as 7,8-dihydro-8-oxoguanine (8-oxoG). Has AP (apurinic/apyrimidinic) lyase activity and introduces nicks in the DNA strand. Cleaves the DNA backbone by beta-delta elimination to generate a single-strand break at the site of the removed base with both 3'- and 5'-phosphates. The protein is Formamidopyrimidine-DNA glycosylase of Azorhizobium caulinodans (strain ATCC 43989 / DSM 5975 / JCM 20966 / LMG 6465 / NBRC 14845 / NCIMB 13405 / ORS 571).